The chain runs to 292 residues: 4-hydroxy-tetrahydrodipicolinate synthase (292 aa).

A pyruvate-binding site is contributed by threonine 46. Catalysis depends on tyrosine 134, which acts as the Proton donor/acceptor. Catalysis depends on lysine 162, which acts as the Schiff-base intermediate with substrate. Isoleucine 204 contributes to the pyruvate binding site.

The protein belongs to the DapA family. Homotetramer; dimer of dimers.

It is found in the cytoplasm. It catalyses the reaction L-aspartate 4-semialdehyde + pyruvate = (2S,4S)-4-hydroxy-2,3,4,5-tetrahydrodipicolinate + H2O + H(+). The protein operates within amino-acid biosynthesis; L-lysine biosynthesis via DAP pathway; (S)-tetrahydrodipicolinate from L-aspartate: step 3/4. Functionally, catalyzes the condensation of (S)-aspartate-beta-semialdehyde [(S)-ASA] and pyruvate to 4-hydroxy-tetrahydrodipicolinate (HTPA). This is 4-hydroxy-tetrahydrodipicolinate synthase from Moorella thermoacetica (strain ATCC 39073 / JCM 9320).